Reading from the N-terminus, the 363-residue chain is Putative serine/threonine-protein kinase gskl-1 (363 aa).

One can recognise a Protein kinase domain in the interval 20 to 304 (FGAHKLCGSG…AIDVLKMPLF (285 aa)). Residues 26–34 (CGSGRFSNV) and Lys50 contribute to the ATP site. Asp146 (proton acceptor) is an active-site residue. The interval 311–363 (PPKKRSNGVEMPNLASYTEMHHKREPETEVVADIQTTEKAEKESDSTNEELED) is disordered. The span at 346–355 (TTEKAEKESD) shows a compositional bias: basic and acidic residues.

This sequence belongs to the protein kinase superfamily. Ser/Thr protein kinase family. In terms of tissue distribution, expressed during multiple stages of spermatogenesis, in males and hermaphrodites (at protein level).

The protein localises to the cytoplasm. The protein resides in the cell projection. Its subcellular location is the pseudopodium. It carries out the reaction L-seryl-[protein] + ATP = O-phospho-L-seryl-[protein] + ADP + H(+). The catalysed reaction is L-threonyl-[protein] + ATP = O-phospho-L-threonyl-[protein] + ADP + H(+). In terms of biological role, may be an autophosphorylating tyrosine kinase, a bifunctional (serine/tyrosine-specific) protein kinase, or a serine kinase that is a substrate for an associated tyrosine kinase. Acting in concert with putative serine/threonine-protein kinase gskl-2, required for sister chromatid segregation and spermatid budding during male meiosis. Plays a role in regulating female meiosis II, together with gskl-2. Involved in sperm pseudopod formation and function, together with gskl-2. This Caenorhabditis elegans protein is Putative serine/threonine-protein kinase gskl-1.